Consider the following 457-residue polypeptide: tRNA modification GTPase MnmE (457 aa).

The (6S)-5-formyl-5,6,7,8-tetrahydrofolate site is built by R24, E81, and K121. Residues 218–380 form the TrmE-type G domain; that stretch reads GIKIVITGKP…LLKYLTKIIS (163 aa). A K(+)-binding site is contributed by N228. Residues 228–233, 247–253, 272–275, and 338–341 each bind GTP; these read NVGKSS, TNIAGTT, DTAG, and NKAD. S232 serves as a coordination point for Mg(2+). The K(+) site is built by T247, I249, and T252. T253 is a Mg(2+) binding site. Residue K457 participates in (6S)-5-formyl-5,6,7,8-tetrahydrofolate binding.

This sequence belongs to the TRAFAC class TrmE-Era-EngA-EngB-Septin-like GTPase superfamily. TrmE GTPase family. Homodimer. Heterotetramer of two MnmE and two MnmG subunits. It depends on K(+) as a cofactor.

It localises to the cytoplasm. Its function is as follows. Exhibits a very high intrinsic GTPase hydrolysis rate. Involved in the addition of a carboxymethylaminomethyl (cmnm) group at the wobble position (U34) of certain tRNAs, forming tRNA-cmnm(5)s(2)U34. The protein is tRNA modification GTPase MnmE of Baumannia cicadellinicola subsp. Homalodisca coagulata.